A 75-amino-acid polypeptide reads, in one-letter code: MKLLLFTALVLVVISLIEVEAENERACIPLEKECTKTPGNCCSGLKCNCYRRFEQGVAKGIQCWCIEKDVTYKGV.

The signal sequence occupies residues 1 to 21 (MKLLLFTALVLVVISLIEVEA). Residues 22-25 (ENER) constitute a propeptide that is removed on maturation. Cystine bridges form between C27-C42, C34-C47, C41-C65, and C49-C63.

It belongs to the neurotoxin 19 (CSTX) family. 06 (U6-Lctx) subfamily. Expressed by the venom gland.

It localises to the secreted. This chain is U6-lycotoxin-Ls1c, found in Lycosa singoriensis (Wolf spider).